Reading from the N-terminus, the 555-residue chain is Intraflagellar transport protein 56 (555 aa).

TPR repeat units follow at residues leucine 57–aspartate 90, isoleucine 151–tyrosine 184, and aspartate 393–asparagine 426.

This sequence belongs to the IFT56 family. In terms of assembly, component of the IFT complex B.

It is found in the cell projection. The protein localises to the cilium. The protein resides in the flagellum. Its function is as follows. Component of the intraflagellar transport (IFT) complex B required for transport of proteins in the motile cilium. Required for transport of specific ciliary cargo proteins related to motility, while it is neither required for IFT complex B assembly or motion nor for cilium assembly. The chain is Intraflagellar transport protein 56 from Chlamydomonas reinhardtii (Chlamydomonas smithii).